Consider the following 458-residue polypeptide: tRNA modification GTPase MnmE (458 aa).

The (6S)-5-formyl-5,6,7,8-tetrahydrofolate site is built by arginine 22, glutamate 84, and arginine 123. The 160-residue stretch at 220-379 (GISTAIIGRP…LEKAIADLFF (160 aa)) folds into the TrmE-type G domain. Asparagine 230 is a K(+) binding site. Residues 230-235 (NVGKSS), 249-255 (TDIAGTT), and 274-277 (DTAG) each bind GTP. Position 234 (serine 234) interacts with Mg(2+). 3 residues coordinate K(+): threonine 249, isoleucine 251, and threonine 254. Residue threonine 255 coordinates Mg(2+). (6S)-5-formyl-5,6,7,8-tetrahydrofolate is bound at residue lysine 458.

The protein belongs to the TRAFAC class TrmE-Era-EngA-EngB-Septin-like GTPase superfamily. TrmE GTPase family. Homodimer. Heterotetramer of two MnmE and two MnmG subunits. K(+) serves as cofactor.

It is found in the cytoplasm. Its function is as follows. Exhibits a very high intrinsic GTPase hydrolysis rate. Involved in the addition of a carboxymethylaminomethyl (cmnm) group at the wobble position (U34) of certain tRNAs, forming tRNA-cmnm(5)s(2)U34. The sequence is that of tRNA modification GTPase MnmE from Bacillus mycoides (strain KBAB4) (Bacillus weihenstephanensis).